The primary structure comprises 244 residues: L-xylulose reductase (244 aa).

Met-1 carries the post-translational modification N-acetylmethionine. Residue 11 to 39 (LVTGAGKGIGRSTVLALKAAGAQVVAVSR) coordinates NADP(+). An Omega-N-methylarginine modification is found at Arg-21. Ser-136 is a binding site for substrate. Tyr-149 serves as the catalytic Proton acceptor. The active site involves Lys-153.

It belongs to the short-chain dehydrogenases/reductases (SDR) family. As to quaternary structure, homotetramer. Highly expressed in kidney, liver and epididymis. Expressed at intermediate level in lung. Weakly or not expressed in brain, heart, spleen and testis.

The protein resides in the membrane. It is found in the apical cell membrane. The catalysed reaction is xylitol + NADP(+) = L-xylulose + NADPH + H(+). Functionally, catalyzes the NADPH-dependent reduction of several pentoses, tetroses, trioses, alpha-dicarbonyl compounds and L-xylulose. Participates in the uronate cycle of glucose metabolism. May play a role in the water absorption and cellular osmoregulation in the proximal renal tubules by producing xylitol, an osmolyte, thereby preventing osmolytic stress from occurring in the renal tubules. In Mus musculus (Mouse), this protein is L-xylulose reductase (Dcxr).